A 427-amino-acid polypeptide reads, in one-letter code: 3-phosphoshikimate 1-carboxyvinyltransferase (427 aa).

3-phosphoshikimate contacts are provided by K22, S23, and R27. K22 is a phosphoenolpyruvate binding site. Positions 96 and 124 each coordinate phosphoenolpyruvate. Residues S169, S170, Q171, S197, D313, N336, and K340 each coordinate 3-phosphoshikimate. Q171 lines the phosphoenolpyruvate pocket. D313 (proton acceptor) is an active-site residue. The phosphoenolpyruvate site is built by R344, R386, and K411.

This sequence belongs to the EPSP synthase family. As to quaternary structure, monomer.

It is found in the cytoplasm. The catalysed reaction is 3-phosphoshikimate + phosphoenolpyruvate = 5-O-(1-carboxyvinyl)-3-phosphoshikimate + phosphate. The protein operates within metabolic intermediate biosynthesis; chorismate biosynthesis; chorismate from D-erythrose 4-phosphate and phosphoenolpyruvate: step 6/7. Catalyzes the transfer of the enolpyruvyl moiety of phosphoenolpyruvate (PEP) to the 5-hydroxyl of shikimate-3-phosphate (S3P) to produce enolpyruvyl shikimate-3-phosphate and inorganic phosphate. This Salmonella heidelberg (strain SL476) protein is 3-phosphoshikimate 1-carboxyvinyltransferase.